Reading from the N-terminus, the 171-residue chain is Pro-corazonin (171 aa).

An N-terminal signal peptide occupies residues 1 to 20 (MLHTRTIALLLVGLVVLVNA). A Pyrrolidone carboxylic acid modification is found at Gln21. Asn31 carries the post-translational modification Asparagine amide. A propeptide spanning residues 82–171 (FLRNPCDLRV…GFSDHRQKIA (90 aa)) is cleaved from the precursor.

The protein belongs to the corazonin family.

Its subcellular location is the secreted. Functionally, cardioactive peptide. Corazonin is probably involved in the physiological regulation of the heart beat. This is Pro-corazonin from Anopheles gambiae (African malaria mosquito).